Here is a 402-residue protein sequence, read N- to C-terminus: NADH-quinone oxidoreductase subunit D (402 aa).

This sequence belongs to the complex I 49 kDa subunit family. In terms of assembly, NDH-1 is composed of 14 different subunits. Subunits NuoB, C, D, E, F, and G constitute the peripheral sector of the complex.

Its subcellular location is the cell inner membrane. The catalysed reaction is a quinone + NADH + 5 H(+)(in) = a quinol + NAD(+) + 4 H(+)(out). Its function is as follows. NDH-1 shuttles electrons from NADH, via FMN and iron-sulfur (Fe-S) centers, to quinones in the respiratory chain. The immediate electron acceptor for the enzyme in this species is believed to be ubiquinone. Couples the redox reaction to proton translocation (for every two electrons transferred, four hydrogen ions are translocated across the cytoplasmic membrane), and thus conserves the redox energy in a proton gradient. This Protochlamydia amoebophila (strain UWE25) protein is NADH-quinone oxidoreductase subunit D.